Reading from the N-terminus, the 558-residue chain is Factor VII-activating protease (558 aa).

Positions 1–23 are cleaved as a signal peptide; it reads MFARMSDLHVLLLMVLAGKTAFG. N54 carries an N-linked (GlcNAc...) asparagine glycan. EGF-like domains lie at 71–107, 109–146, and 148–186; these read EDDPCLSNPCTHGGDCLVSGATFTCRCPDPFSGNRCQ, VQNKCKNNPCGRGDCLITQSPPYHRCACKHPYRGSDCS, and VVPVCRPNPCQNGGTCSRQRRRSKFTCACPDQFKGKLCE. Intrachain disulfides connect C75–C86, C80–C95, C97–C106, C113–C123, C118–C134, C136–C145, C152–C163, C157–C174, C176–C185, C192–C274, C213–C255, C244–C269, C299–C433, C345–C361, C353–C422, C445–C513, C475–C491, and C503–C531. The region spanning 191–274 is the Kringle domain; it reads DCYVDDGYSY…KWEYCDVPAC (84 aa). Residues 312-553 enclose the Peptidase S1 domain; the sequence is IFGGFKSTAG…FLTWIKATME (242 aa). Residues H360 and D409 each act as charge relay system in the active site. S507 (charge relay system) is an active-site residue.

The protein belongs to the peptidase S1 family. As to quaternary structure, heterodimer; disulfide-linked. Heterodimer of a 50 kDa heavy and a 27 kDa light chain linked by a disulfide bond. Proteolytic cleavage at Gly-23 or Leu-27 can give rise to the 50 kDa heavy chain (HC) and cleavage at Arg-311 or Lys-317 can give rise to the 27 kDa light chain (LC). The HC can undergo further proteolytic cleavage giving rise to a 26 kDa fragment. The LC can undergo further proteolytic cleavage at Arg-311 leading to a 17-kDa fragment and at Arg-478 leading to a 8-kDa fragment.

It is found in the secreted. Its function is as follows. Cleaves the alpha-chain at multiple sites and the beta-chain between 'Lys-53' and 'Lys-54' but not the gamma-chain of fibrinogen and therefore does not initiate the formation of the fibrin clot and does not cause the fibrinolysis directly. It does not cleave (activate) prothrombin and plasminogen but converts the inactive single chain urinary plasminogen activator (pro-urokinase) to the active two chain form. Activates coagulation factor VII. May function as a tumor suppressor negatively regulating cell proliferation and cell migration. This is Factor VII-activating protease (HABP2) from Bos taurus (Bovine).